Consider the following 372-residue polypeptide: 18-hydroxynorfluorocurarine reductase (372 aa).

Residues cysteine 47, aspartate 50, histidine 69, glutamate 70, cysteine 100, cysteine 103, cysteine 106, cysteine 114, and cysteine 172 each coordinate Zn(2+). NADP(+)-binding positions include glycine 197–glycine 202, lysine 226, leucine 283–alanine 285, serine 307, and arginine 354.

Belongs to the zinc-containing alcohol dehydrogenase family. Homodimer. Requires Zn(2+) as cofactor. Mainly expressed in roots.

The enzyme catalyses (19E)-cur-19-en-17-al + NADP(+) = norfluorocurarine + NADPH + H(+). It catalyses the reaction 17,18-epoxy-17-hydroxycur-19-ene + NADP(+) = 18-hydroxynorfluorocurarine + NADPH + H(+). Its pathway is alkaloid biosynthesis. In terms of biological role, alcohol dehydrogenase involved in the biosynthesis of curare monoterpene indole alkaloids (MIAs), natural products such as strychnine, a neurotoxic compound used as a pesticide to control rodents, and its pharmacologically active derivatives, including brucine, used to regulate blood pressure. Curare alkaloids act as animal glycine receptor antagonists. Catalyzes the conversion of norfluorocurarine to desoxy Wieland-Gumlich aldehyde, and of 18-OH norfluorocurarine to Wieland-Gumlich aldehyde. This is 18-hydroxynorfluorocurarine reductase from Strychnos nux-vomica (Poison nut).